The sequence spans 60 residues: Large ribosomal subunit protein bL32 (60 aa).

The span at 1–16 shows a compositional bias: basic residues; it reads MAVPRRKTSPSRRGMR. Residues 1 to 60 form a disordered region; it reads MAVPRRKTSPSRRGMRRSADAIKKPTYAEDKDSGELRRPHHLDLKTGMYKGRQVLIKKES. Over residues 17-44 the composition is skewed to basic and acidic residues; that stretch reads RSADAIKKPTYAEDKDSGELRRPHHLDL.

The protein belongs to the bacterial ribosomal protein bL32 family.

This is Large ribosomal subunit protein bL32 from Rhodopseudomonas palustris (strain BisA53).